Consider the following 352-residue polypeptide: Quinolinate synthase (352 aa).

Residues His48 and Ser69 each contribute to the iminosuccinate site. [4Fe-4S] cluster is bound at residue Cys114. Residues 140-142 (YAN) and Ser157 contribute to the iminosuccinate site. Cys201 contacts [4Fe-4S] cluster. Residues 227 to 229 (HPE) and Thr244 contribute to the iminosuccinate site. Position 298 (Cys298) interacts with [4Fe-4S] cluster.

Belongs to the quinolinate synthase family. Type 1 subfamily. Requires [4Fe-4S] cluster as cofactor.

The protein resides in the cytoplasm. The catalysed reaction is iminosuccinate + dihydroxyacetone phosphate = quinolinate + phosphate + 2 H2O + H(+). It functions in the pathway cofactor biosynthesis; NAD(+) biosynthesis; quinolinate from iminoaspartate: step 1/1. Catalyzes the condensation of iminoaspartate with dihydroxyacetone phosphate to form quinolinate. This Pseudomonas putida (strain ATCC 700007 / DSM 6899 / JCM 31910 / BCRC 17059 / LMG 24140 / F1) protein is Quinolinate synthase.